Reading from the N-terminus, the 378-residue chain is Copper-containing nitrite reductase (378 aa).

Residues 1 to 38 (MTEQLQMTRRTMLAGAALAGAVAPLLHTAQAHAAGAAA) constitute a signal peptide (tat-type signal). Plastocyanin-like domains lie at 39 to 213 (AAGA…YDKI) and 214 to 378 (YYVG…PASM). 7 residues coordinate Cu cation: His-133, His-138, His-173, Cys-174, His-183, Met-188, and His-344.

This sequence belongs to the multicopper oxidase family. In terms of assembly, homotrimer. The cofactor is Cu(+). Cu(2+) serves as cofactor. Requires FAD as cofactor. In terms of processing, predicted to be exported by the Tat system. The position of the signal peptide cleavage has been experimentally proven.

The protein localises to the periplasm. The catalysed reaction is nitric oxide + Fe(III)-[cytochrome c] + H2O = Fe(II)-[cytochrome c] + nitrite + 2 H(+). The protein operates within nitrogen metabolism; nitrate reduction (denitrification); dinitrogen from nitrate: step 2/4. This is Copper-containing nitrite reductase (nirK) from Achromobacter cycloclastes.